Here is a 685-residue protein sequence, read N- to C-terminus: E3 ubiquitin-protein ligase RNF103 (685 aa).

4 consecutive transmembrane segments (helical) span residues 6–26, 326–346, 366–386, and 411–431; these read FFLL…EAIV, LFVL…FITQ, LLII…LDSF, and MFYS…GLLI. Residues 526 to 543 are compositionally biased toward acidic residues; the sequence is EEMSEGSQDTENDSESEN. A disordered region spans residues 526 to 550; that stretch reads EEMSEGSQDTENDSESENTDTLSSE. The RING-type zinc finger occupies 621-663; that stretch reads CVVCLENFENGCLLMGLPCGHVFHQNCIVMWLAGGRHCCPVCR.

In terms of assembly, interacts with DERL1 and VCP. In terms of tissue distribution, highly expressed in the normal cerebellum but not in the cerebral cortex.

The protein resides in the endoplasmic reticulum membrane. It catalyses the reaction S-ubiquitinyl-[E2 ubiquitin-conjugating enzyme]-L-cysteine + [acceptor protein]-L-lysine = [E2 ubiquitin-conjugating enzyme]-L-cysteine + N(6)-ubiquitinyl-[acceptor protein]-L-lysine.. The protein operates within protein modification; protein ubiquitination. Functionally, acts as an E2-dependent E3 ubiquitin-protein ligase, probably involved in the ER-associated protein degradation pathway. The polypeptide is E3 ubiquitin-protein ligase RNF103 (RNF103) (Homo sapiens (Human)).